The sequence spans 140 residues: Heavy metal-associated isoprenylated plant protein 31 (140 aa).

An HMA domain is found at 3-67 (MTVEIRVPNL…AVRRAGKAAE (65 aa)). A metal cation-binding residues include Cys-14 and Cys-17. Cys-137 is subject to Cysteine methyl ester. Cys-137 carries the S-farnesyl cysteine lipid modification. The propeptide at 138 to 140 (TIM) is removed in mature form.

The protein belongs to the HIPP family.

Its function is as follows. Heavy-metal-binding protein. The chain is Heavy metal-associated isoprenylated plant protein 31 from Arabidopsis thaliana (Mouse-ear cress).